The chain runs to 409 residues: MQRLAMDLRMLSRELSLYLEHQVRVGFFGSGVGLSLILGFSVAYAFYYLSSIAKKPQLVTGGESFSRFLQDHCPVVTETYYPTVWCWEGRGQTLLRPFITSKPPVQYRNELIKTADGGQISLDWFDNDNSTCYMDASTRPTILLLPGLTGTSKESYILHMIHLSEELGYRCVVFNNRGVAGENLLTPRTYCCANTEDLETVIHHVHSLYPSAPFLAAGVSMGGMLLLNYLGKIGSKTPLMAAATFSVGWNTFACSESLEKPLNWLLFNYYLTTCLQSSVNKHRHMFVKQVDMDHVMKAKSIREFDKRFTSVMFGYQTIDDYYTDASPSPRLKSVGIPVLCLNSVDDVFSPSHAIPIETAKQNPNVALVLTSYGGHIGFLEGIWPRQSTYMDRVFKQFVQAMVEHGHELS.

A helical; Signal-anchor for type II membrane protein membrane pass occupies residues 26-46 (GFFGSGVGLSLILGFSVAYAF). The AB hydrolase-1 domain occupies 140–233 (PTILLLPGLT…MLLLNYLGKI (94 aa)). Active-site charge relay system residues include Ser-220, Asp-346, and His-375.

It belongs to the AB hydrolase superfamily. AB hydrolase 4 family.

It localises to the membrane. It catalyses the reaction a 1,2-diacyl-sn-glycero-3-phosphocholine + H2O = a 1-acyl-sn-glycero-3-phosphocholine + a fatty acid + H(+). It carries out the reaction a 1,2-diacyl-sn-glycero-3-phosphocholine + H2O = a 2-acyl-sn-glycero-3-phosphocholine + a fatty acid + H(+). The enzyme catalyses 1-tetradecanoyl-2-(9Z,12Z-octadecadienoyl)-sn-glycero-3-phosphocholine + H2O = 2-(9Z,12Z-octadecadienoyl)-sn-glycero-3-phosphocholine + tetradecanoate + H(+). The catalysed reaction is 1-tetradecanoyl-2-(9Z,12Z-octadecadienoyl)-sn-glycero-3-phosphocholine + H2O = 1-tetradecanoyl-sn-glycero-3-phosphocholine + (9Z,12Z)-octadecadienoate + H(+). It catalyses the reaction 1-tetradecanoyl-2-(5Z,8Z,11Z,14Z-eicosatetraenoyl)-sn-glycero-3-phosphocholine + H2O = 2-(5Z,8Z,11Z,14Z)-eicosatetraenoyl-sn-glycero-3-phosphocholine + tetradecanoate + H(+). It carries out the reaction 1-tetradecanoyl-2-(4Z,7Z,10Z,13Z,16Z,19Z-docosahexaenoyl)-sn-glycero-3-phosphocholine + H2O = 2-(4Z,7Z,10Z,13Z,16Z,19Z-docosahexaenoyl)-sn-glycero-3-phosphocholine + tetradecanoate + H(+). The enzyme catalyses 1,2-ditetradecanoyl-sn-glycero-3-phosphocholine + H2O = 2-tetradecanoyl-sn-glycero-3-phosphocholine + tetradecanoate + H(+). The catalysed reaction is 1-octadecanoyl-2-acetyl-sn-glycero-3-phosphocholine + H2O = 1-octadecanoyl-sn-glycero-3-phosphocholine + acetate + H(+). It catalyses the reaction 1,2-ditetradecanoyl-sn-glycero-3-phosphocholine + H2O = 1-tetradecanoyl-sn-glycero-3-phosphocholine + tetradecanoate + H(+). It carries out the reaction 1-octadecanoyl-2-pentanoyl-sn-glycero-3-phosphocholine + H2O = pentanoate + 1-octadecanoyl-sn-glycero-3-phosphocholine + H(+). The enzyme catalyses 1-octadecanoyl-2-hexanoyl-sn-glycero-3-phosphocholine + H2O = hexanoate + 1-octadecanoyl-sn-glycero-3-phosphocholine + H(+). The catalysed reaction is 1-octadecanoyl-2-octanoyl-sn-glycero-3-phosphocholine + H2O = 1-octadecanoyl-sn-glycero-3-phosphocholine + octanoate + H(+). It catalyses the reaction 1-octadecanoyl-2-nonanoyl-sn-glycero-3-phosphocholine + H2O = nonanoate + 1-octadecanoyl-sn-glycero-3-phosphocholine + H(+). It carries out the reaction 1-O-hexadecyl-2-nonadioyl-sn-glycero-3-phosphocholine + H2O = nonanedioate + 1-O-hexadecyl-sn-glycero-3-phosphocholine + H(+). The enzyme catalyses 1-hexadecanoyl-2-nonadioyl-sn-glycero-3-phosphocholine + H2O = nonanedioate + 1-hexadecanoyl-sn-glycero-3-phosphocholine + H(+). The catalysed reaction is 1-hexadecanoyl-2-(9-oxononanoyl)-sn-glycero-3-phosphocholine + H2O = 9-oxononanoate + 1-hexadecanoyl-sn-glycero-3-phosphocholine + H(+). It catalyses the reaction 1-hexadecanoyl-2-(5-oxopentanoyl)-sn-glycero-3-phosphocholine + H2O = 5-oxopentanoate + 1-hexadecanoyl-sn-glycero-3-phosphocholine + H(+). It carries out the reaction 1-hexadecanoyl-2-glutaroyl-sn-glycero-3-phosphocholine + H2O = glutarate + 1-hexadecanoyl-sn-glycero-3-phosphocholine + H(+). The enzyme catalyses 1-O-hexadecyl-2-acetyl-sn-glycero-3-phosphocholine + H2O = 1-O-hexadecyl-sn-glycero-3-phosphocholine + acetate + H(+). Functionally, phospholipase that may play a role in phospholipids remodeling. May selectively cleave myristate (C14)-containing phosphatidylcholines through its predominant phospholipase 1 activity, cleaving preferentially acyl groups in sn1 position. In parallel, may have a minor phospholipase 2 activity acting on acyl groups in position sn2. In addition to (C14)-containing phosphatidylcholines, may also act on other medium-chain-containing and oxidatively truncated phospholipids. The sequence is that of Phospholipase ABHD3 from Homo sapiens (Human).